We begin with the raw amino-acid sequence, 568 residues long: Protein yellow (568 aa).

A signal peptide spans 1 to 28; the sequence is MHAQDKGGVLPGLSLLLIAVAMVCPSQA. N-linked (GlcNAc...) asparagine glycosylation is found at Asn-151 and Asn-222.

The protein belongs to the major royal jelly protein family.

It is found in the secreted. In terms of biological role, controls the pigmentation pattern of the adult cuticle and larval mouth parts. In Drosophila guanche (Fruit fly), this protein is Protein yellow (y).